The chain runs to 885 residues: DNA polymerase eta (885 aa).

Residues 18-274 (VLLVDMDCFF…LPVGKIKGLG (257 aa)) form the UmuC domain. 2 residues coordinate Mg(2+): D22 and M23. Mn(2+) is bound by residues D22 and M23. R70 is an a 2'-deoxyribonucleoside 5'-triphosphate binding site. The Mg(2+) site is built by D125 and E126. Mn(2+)-binding residues include D125 and E126. The active site involves E126. Disordered regions lie at residues 599 to 653 (AIEA…DLYV) and 658 to 677 (VPPT…RKFD). Positions 608–618 (FEEDTEEETEL) are enriched in acidic residues. Positions 628-649 (EGQSSDAGQEQDPNTLNDSTGN) are enriched in polar residues. Residues 701-737 (DILPTIKCDQCGANIPDEVKSLQTHRDHHFAQELSRT) form a UBZ3-type 1 zinc finger. 4 residues coordinate Zn(2+): C708, C711, H725, and H729. The interval 722 to 783 (LQTHRDHHFA…YSTAPPSNSI (62 aa)) is disordered. Over residues 739–748 (RSTEREERTQ) the composition is skewed to basic and acidic residues. Low complexity predominate over residues 766–780 (TAGSGSSSYSTAPPS). The segment at 798-832 (SDPQMNQCPECKAFIKCVDMPEHLDYHVARNLQRE) adopts a UBZ3-type 2 zinc-finger fold. Zn(2+) contacts are provided by C805, C808, H820, and H824. A disordered region spans residues 846–870 (NKEKISPVQPKKQSQKKLNSTISAS).

The protein belongs to the DNA polymerase type-Y family. Interacts (via C-terminus) with nopo. Mg(2+) is required as a cofactor. It depends on Mn(2+) as a cofactor. Ubiquitination enhanced by nopo. In terms of tissue distribution, expressed in ovaries and testes.

The protein localises to the nucleus. The enzyme catalyses DNA(n) + a 2'-deoxyribonucleoside 5'-triphosphate = DNA(n+1) + diphosphate. Its activity is regulated as follows. The enzyme in complex with the DNA substrate binds a third divalent metal cation. This binding is essential for catalyzing the DNA synthesis. In terms of biological role, DNA polymerase specifically involved in the DNA repair by translesion synthesis (TLS). Plays an important role in translesion synthesis, where the normal high-fidelity DNA polymerases cannot proceed and DNA synthesis stalls. Inserts one or 2 nucleotide(s) opposite the lesion. During homologous recombination (HR) repair, has a overlapping role with the error-prone translesion polymerase PolZ1/DNApol-zeta to initiate repair synthesis that is completed by end joining or another polymerase that can bind and reinitiate synthesis. Particularly important for the repair of UV-induced pyrimidine dimers and for hydroxyurea (HU)-induced DNA damage. Although inserts the correct base, may cause base transitions and transversions depending upon the context. Forms a Schiff base with 5'-deoxyribose phosphate at abasic sites, but does not have any lyase activity, preventing the release of the 5'-deoxyribose phosphate (5'-dRP) residue. This covalent trapping of the enzyme by the 5'-dRP residue inhibits its DNA synthetic activity during base excision repair, thereby avoiding high incidence of mutagenesis. The protein is DNA polymerase eta of Drosophila melanogaster (Fruit fly).